The following is a 338-amino-acid chain: MDMQGAIRLVTEGTDLTEAEMTEVMRQIMTGEATPAQIGGFLIGLRMKGETVAEITAAARVMRELATRVTVDEPHLLDTCGTGGDASHTLNVSTACAFVAAAGGARVAKHGNRSVSSSCGSADVLEAAGARLDLNADQVAECIRRVGVGFLFAPQHHSAMKHAIGPRREMGVRTLFNILGPLTNPAGAPHQLLGVYNKHWVVPVAETLRALGSRRVLVVHADDGLDEISIGSDTLVAELNEGEIHEYRITPEQFGLPRAELSDLQVGTAEESLALIREAFAGWEGPAFNIIAINAGAALYAAEKAPTLDAGVAGAAELLRNGSALRKLEAFVRCTREV.

5-phospho-alpha-D-ribose 1-diphosphate-binding positions include Gly-81, 84-85 (GD), Thr-89, 91-94 (NVST), 109-117 (KHGNRSVSS), and Ser-121. Gly-81 is an anthranilate binding site. Ser-93 is a binding site for Mg(2+). Position 112 (Asn-112) interacts with anthranilate. Arg-167 is a binding site for anthranilate. Mg(2+)-binding residues include Asp-226 and Glu-227.

This sequence belongs to the anthranilate phosphoribosyltransferase family. Homodimer. Mg(2+) serves as cofactor.

It catalyses the reaction N-(5-phospho-beta-D-ribosyl)anthranilate + diphosphate = 5-phospho-alpha-D-ribose 1-diphosphate + anthranilate. It functions in the pathway amino-acid biosynthesis; L-tryptophan biosynthesis; L-tryptophan from chorismate: step 2/5. Functionally, catalyzes the transfer of the phosphoribosyl group of 5-phosphorylribose-1-pyrophosphate (PRPP) to anthranilate to yield N-(5'-phosphoribosyl)-anthranilate (PRA). The polypeptide is Anthranilate phosphoribosyltransferase (Alkalilimnicola ehrlichii (strain ATCC BAA-1101 / DSM 17681 / MLHE-1)).